The following is a 343-amino-acid chain: Anthranilate phosphoribosyltransferase (343 aa).

5-phospho-alpha-D-ribose 1-diphosphate contacts are provided by residues G84, 87–88 (GD), T92, 94–97 (NIST), 112–120 (KHGNRGVSS), and S124. Residue G84 participates in anthranilate binding. Residue S96 coordinates Mg(2+). Anthranilate is bound at residue N115. R170 serves as a coordination point for anthranilate. D229 and E230 together coordinate Mg(2+).

Belongs to the anthranilate phosphoribosyltransferase family. In terms of assembly, homodimer. The cofactor is Mg(2+).

The enzyme catalyses N-(5-phospho-beta-D-ribosyl)anthranilate + diphosphate = 5-phospho-alpha-D-ribose 1-diphosphate + anthranilate. It functions in the pathway amino-acid biosynthesis; L-tryptophan biosynthesis; L-tryptophan from chorismate: step 2/5. In terms of biological role, catalyzes the transfer of the phosphoribosyl group of 5-phosphorylribose-1-pyrophosphate (PRPP) to anthranilate to yield N-(5'-phosphoribosyl)-anthranilate (PRA). This is Anthranilate phosphoribosyltransferase from Burkholderia cenocepacia (strain ATCC BAA-245 / DSM 16553 / LMG 16656 / NCTC 13227 / J2315 / CF5610) (Burkholderia cepacia (strain J2315)).